Here is an 80-residue protein sequence, read N- to C-terminus: U-scoloptoxin(15)-Er1a (80 aa).

The first 22 residues, 1 to 22, serve as a signal peptide directing secretion; it reads MQNKGVVLTLFLVVSMAIVISS.

It belongs to the scoloptoxin-15 family. Contains 2 disulfide bonds. In terms of tissue distribution, expressed by the venom gland.

The protein localises to the secreted. The polypeptide is U-scoloptoxin(15)-Er1a (Ethmostigmus rubripes (Giant centipede)).